A 248-amino-acid chain; its full sequence is MASSFSTQLVQSQNLLPRFHAVQGKPHVVSSIGCSKLSSTYHYAPRLSVSQQSKAKSITSRRITCASGAQGEVAELQAKVTSKIFFDIEIGGESAGRIVIGLFGDAVPKTVENFKTLSTGAKGYGYQGSFFHRIIPNFMIQGGDFTEGNGTGGVSIYGSKFEDESFDLKHVGPGVLSMANAGPNTNGSQFFICTVPTPWLDNRHVVFGHVIEGLDVVKQLESQETSKLDNSPKKPCKIAKSGELPLDG.

A PPIase cyclophilin-type domain is found at 85–243 (FFDIEIGGES…KPCKIAKSGE (159 aa)). The tract at residues 223–248 (QETSKLDNSPKKPCKIAKSGELPLDG) is disordered.

Belongs to the cyclophilin-type PPIase family. As to expression, highly expressed in leaf.

Its subcellular location is the plastid. The protein localises to the chloroplast stroma. It carries out the reaction [protein]-peptidylproline (omega=180) = [protein]-peptidylproline (omega=0). With respect to regulation, binds cyclosporin A (CsA). CsA mediates some of its effects via an inhibitory action on PPIase. In terms of biological role, PPIases accelerate the folding of proteins. It catalyzes the cis-trans isomerization of proline imidic peptide bonds in oligopeptides. This chain is Peptidyl-prolyl cis-trans isomerase, chloroplastic, found in Vicia faba (Broad bean).